The following is a 120-amino-acid chain: Cytochrome c2 iso-1 (120 aa).

Glutamine 1 is subject to Pyrrolidone carboxylic acid. 4 residues coordinate heme c: cysteine 15, cysteine 18, histidine 19, and methionine 98.

The protein belongs to the cytochrome c family. In terms of processing, binds 1 heme c group covalently per subunit.

Functionally, cytochrome c2 is found mainly in purple, non-sulfur, photosynthetic bacteria where it functions as the electron donor to the oxidized bacteriochlorophyll in the photophosphorylation pathway. However, it may also have a role in the respiratory chain and is found in some non-photosynthetic bacteria. The protein is Cytochrome c2 iso-1 of Rhodospirillum centenum (Rhodocista centenaria).